The primary structure comprises 158 residues: Protein shisa-like-2B (158 aa).

A helical membrane pass occupies residues 65-85; sequence IGALVGLGIAALVLLAFVISV.

Belongs to the shisa family.

It localises to the membrane. This is Protein shisa-like-2B (Shisal2b) from Mus musculus (Mouse).